The primary structure comprises 179 residues: Macro domain-containing protein XCC3184 (179 aa).

Residues 1-175 (MRIEVWQGDI…AYHQALATQE (175 aa)) form the Macro domain.

Belongs to the MacroD-type family.

This chain is Macro domain-containing protein XCC3184, found in Xanthomonas campestris pv. campestris (strain ATCC 33913 / DSM 3586 / NCPPB 528 / LMG 568 / P 25).